The primary structure comprises 696 residues: uncharacterized protein (696 aa).

A GGDEF domain is found at 293 to 426; the sequence is SVLGLVLLGF…GSRQYCFYEE (134 aa). The region spanning 435–689 is the EAL domain; it reads RIQLEHALHQ…EITAFLAEGN (255 aa).

This is an uncharacterized protein from Synechocystis sp. (strain ATCC 27184 / PCC 6803 / Kazusa).